A 284-amino-acid chain; its full sequence is Tropomyosin (284 aa).

Residues 1 to 284 adopt a coiled-coil conformation; it reads MDSIKKKMMA…DTTFAELTSF (284 aa). The segment at 97–140 is disordered; sequence EDFEQSSGRLTETSTKLDDASKAAEESERNRKTLETRSISDDER. Over residues 101 to 110 the composition is skewed to polar residues; sequence QSSGRLTETS. Residues 111–140 are compositionally biased toward basic and acidic residues; the sequence is TKLDDASKAAEESERNRKTLETRSISDDER.

The protein belongs to the tropomyosin family. As to quaternary structure, homodimer.

Tropomyosin, in association with the troponin complex, plays a central role in the calcium dependent regulation of muscle contraction. In Echinococcus multilocularis (Fox tapeworm), this protein is Tropomyosin.